A 279-amino-acid chain; its full sequence is NAD kinase (279 aa).

Catalysis depends on Asp57, which acts as the Proton acceptor. Residues 57–58, 133–134, Arg159, Asp161, 172–177, and Ala196 contribute to the NAD(+) site; these read DG, NE, and TAYNKS.

This sequence belongs to the NAD kinase family. A divalent metal cation is required as a cofactor.

It localises to the cytoplasm. It catalyses the reaction NAD(+) + ATP = ADP + NADP(+) + H(+). Involved in the regulation of the intracellular balance of NAD and NADP, and is a key enzyme in the biosynthesis of NADP. Catalyzes specifically the phosphorylation on 2'-hydroxyl of the adenosine moiety of NAD to yield NADP. This is NAD kinase from Streptococcus thermophilus (strain CNRZ 1066).